The sequence spans 151 residues: Probable cGMP 3',5'-cyclic phosphodiesterase subunit delta (151 aa).

This sequence belongs to the PDE6D/unc-119 family. As to quaternary structure, interacts with Pde6.

It localises to the nucleus. The protein resides in the cytoplasm. The polypeptide is Probable cGMP 3',5'-cyclic phosphodiesterase subunit delta (Culex quinquefasciatus (Southern house mosquito)).